A 706-amino-acid chain; its full sequence is Elongation factor G (706 aa).

A tr-type G domain is found at 8–290; that stretch reads NRYRNIGICA…AVIDYLPAPT (283 aa). Residues 17 to 24, 88 to 92, and 142 to 145 contribute to the GTP site; these read AHVDAGKT, DTPGH, and NKMD.

Belongs to the TRAFAC class translation factor GTPase superfamily. Classic translation factor GTPase family. EF-G/EF-2 subfamily.

Its subcellular location is the cytoplasm. Its function is as follows. Catalyzes the GTP-dependent ribosomal translocation step during translation elongation. During this step, the ribosome changes from the pre-translocational (PRE) to the post-translocational (POST) state as the newly formed A-site-bound peptidyl-tRNA and P-site-bound deacylated tRNA move to the P and E sites, respectively. Catalyzes the coordinated movement of the two tRNA molecules, the mRNA and conformational changes in the ribosome. In Stutzerimonas stutzeri (strain A1501) (Pseudomonas stutzeri), this protein is Elongation factor G.